The sequence spans 117 residues: Large ribosomal subunit protein bL20 (117 aa).

The protein belongs to the bacterial ribosomal protein bL20 family.

Binds directly to 23S ribosomal RNA and is necessary for the in vitro assembly process of the 50S ribosomal subunit. It is not involved in the protein synthesizing functions of that subunit. This chain is Large ribosomal subunit protein bL20, found in Campylobacter jejuni subsp. jejuni serotype O:2 (strain ATCC 700819 / NCTC 11168).